We begin with the raw amino-acid sequence, 121 residues long: Flagellar hook-basal body complex protein FliE (121 aa).

This sequence belongs to the FliE family.

It is found in the bacterial flagellum basal body. This chain is Flagellar hook-basal body complex protein FliE, found in Saccharophagus degradans (strain 2-40 / ATCC 43961 / DSM 17024).